A 408-amino-acid polypeptide reads, in one-letter code: Imidazolonepropionase (408 aa).

Residues His72 and His74 each contribute to the Fe(3+) site. The Zn(2+) site is built by His72 and His74. Residues Arg81, Tyr144, and His177 each contribute to the 4-imidazolone-5-propanoate site. Residue Tyr144 participates in N-formimidoyl-L-glutamate binding. His242 serves as a coordination point for Fe(3+). His242 contributes to the Zn(2+) binding site. A 4-imidazolone-5-propanoate-binding site is contributed by Gln245. Asp317 serves as a coordination point for Fe(3+). Asp317 serves as a coordination point for Zn(2+). Residues Asn319 and Gly321 each contribute to the N-formimidoyl-L-glutamate site. Thr322 serves as a coordination point for 4-imidazolone-5-propanoate.

The protein belongs to the metallo-dependent hydrolases superfamily. HutI family. Zn(2+) serves as cofactor. Fe(3+) is required as a cofactor.

It localises to the cytoplasm. The catalysed reaction is 4-imidazolone-5-propanoate + H2O = N-formimidoyl-L-glutamate. Its pathway is amino-acid degradation; L-histidine degradation into L-glutamate; N-formimidoyl-L-glutamate from L-histidine: step 3/3. In terms of biological role, catalyzes the hydrolytic cleavage of the carbon-nitrogen bond in imidazolone-5-propanoate to yield N-formimidoyl-L-glutamate. It is the third step in the universal histidine degradation pathway. The polypeptide is Imidazolonepropionase (Aliivibrio fischeri (strain MJ11) (Vibrio fischeri)).